A 265-amino-acid polypeptide reads, in one-letter code: Acetylglutamate kinase (265 aa).

Residues 41–42 (GG), R63, and N156 each bind substrate.

This sequence belongs to the acetylglutamate kinase family. ArgB subfamily.

It is found in the cytoplasm. It catalyses the reaction N-acetyl-L-glutamate + ATP = N-acetyl-L-glutamyl 5-phosphate + ADP. The protein operates within amino-acid biosynthesis; L-arginine biosynthesis; N(2)-acetyl-L-ornithine from L-glutamate: step 2/4. Its function is as follows. Catalyzes the ATP-dependent phosphorylation of N-acetyl-L-glutamate. This is Acetylglutamate kinase from Brevibacillus brevis (strain 47 / JCM 6285 / NBRC 100599).